The primary structure comprises 567 residues: MRYDTYGDSAPIKKTGAGYDVPEGVDIRGRYDGEFAKILTRDALQFVADLQREFRNRIRYAIECRKEAKSRYNAGALPGFEHPATKYIREGEWTCAPVPPAVADRKVEITGPVERKMIINALNSGAKVFMADFEDALSPSWENLMRGQVNLRDAVNGTISFHDKARNRVYKLNDQIAKLFVRPRGWHLPEAHILIDGEPATGCLVDFGLYFYHNYAAFRRNQGAGYGPFFYLPKMEHSREAKIWNCVFEKAEKMAGIERGSIRATVLIETLPAVFQMNEILYELRDHSVGLNCGRWDYIFSYVKTFQAHPDRPLPDRVQVGMTQHFMKSYSDLLVWTCHRRGVHAMGGMAAQIPIRDDPAANKAALELVRKDKLREVKAGHDGTWAAHPGLIPACMEVFANNMGNTPHQIQAMKREDAANITEEDLIQRPRGVRTLEGLRLNTRVGIQYLAAWLTGTGSVPLYNLMEDAATAEISRVQNWQWLKYGVELDGDGLGVKVTFDLLGRVVEDEMARIEREVGKEKFKKGMYKEACKMFVRQCAAPTLDDFLTLDAYNNIVIHYPKGSSRL.

Arginine 182 acts as the Proton acceptor in catalysis. The active-site Proton donor is the aspartate 468. The Microbody targeting signal motif lies at 565 to 567; the sequence is SRL.

This sequence belongs to the malate synthase family.

It localises to the glyoxysome. The catalysed reaction is glyoxylate + acetyl-CoA + H2O = (S)-malate + CoA + H(+). It participates in carbohydrate metabolism; glyoxylate cycle; (S)-malate from isocitrate: step 2/2. In Ricinus communis (Castor bean), this protein is Malate synthase, glyoxysomal.